A 147-amino-acid polypeptide reads, in one-letter code: UPF0047 protein sll1880 (147 aa).

Belongs to the UPF0047 family.

This is UPF0047 protein sll1880 from Synechocystis sp. (strain ATCC 27184 / PCC 6803 / Kazusa).